We begin with the raw amino-acid sequence, 709 residues long: Catalase HPII (709 aa).

Residues 1 to 26 (MSEQNNEQRSQAAGTDTVDRGNSNAK) show a composition bias toward polar residues. The tract at residues 1-32 (MSEQNNEQRSQAAGTDTVDRGNSNAKLEQLEA) is disordered. Catalysis depends on residues H90 and N163. Residue Y377 participates in heme binding. The tract at residues 419–443 (RASYEPNSIDGGWPKETPPAARNGG) is disordered.

The protein belongs to the catalase family. HPII subfamily. It depends on heme as a cofactor.

Its subcellular location is the cytoplasm. The enzyme catalyses 2 H2O2 = O2 + 2 H2O. Functionally, decomposes hydrogen peroxide into water and oxygen; serves to protect cells from the toxic effects of hydrogen peroxide. In Pseudomonas aeruginosa (strain ATCC 15692 / DSM 22644 / CIP 104116 / JCM 14847 / LMG 12228 / 1C / PRS 101 / PAO1), this protein is Catalase HPII (katE).